Here is a 585-residue protein sequence, read N- to C-terminus: Glutamate decarboxylase 2 (585 aa).

Residues 1-24 (MASPGSGFWSFGSEDGSGDPENSG) are disordered. Residues Ser-3, Ser-6, Ser-10, and Ser-13 each carry the phosphoserine modification. S-palmitoyl cysteine attachment occurs at residues Cys-30 and Cys-45. 181–183 (QLS) is a binding site for substrate. N6-(pyridoxal phosphate)lysine is present on Lys-396. Arg-558 serves as a coordination point for substrate.

Belongs to the group II decarboxylase family. Homodimer. Requires pyridoxal 5'-phosphate as cofactor. In terms of processing, phosphorylated; which does not affect kinetic parameters or subcellular location. Post-translationally, palmitoylated; which is required for presynaptic clustering.

Its subcellular location is the cytoplasm. The protein resides in the cytosol. The protein localises to the cytoplasmic vesicle. It localises to the presynaptic cell membrane. It is found in the golgi apparatus membrane. The catalysed reaction is L-glutamate + H(+) = 4-aminobutanoate + CO2. Functionally, catalyzes the production of GABA. The sequence is that of Glutamate decarboxylase 2 (GAD2) from Sus scrofa (Pig).